The sequence spans 65 residues: Ringhalexin (65 aa).

Cystine bridges form between C3/C24, C17/C42, C46/C57, and C58/C63.

As to expression, expressed by the venom gland.

The protein resides in the secreted. Its function is as follows. Has anticoagulant activity, since it is able to inhibit the activation of coagulation factor X (F10) by coagulation factor VIIa (F7) (IC(50)=123.8 nM). Also shows weak irreversible neurotoxicity. This chain is Ringhalexin, found in Hemachatus haemachatus (Rinkhals).